The following is a 111-amino-acid chain: MSDTLNRLAEVLEERKQAAPDSSYVASLYHKGLNKILEKLGEESVETIIAAKDAQISKDYSDVIYETADLWFHSLVMLSALGQHPQAVLDELERRFGLSGHDEKAARQPSA.

This sequence belongs to the PRA-PH family.

It localises to the cytoplasm. It carries out the reaction 1-(5-phospho-beta-D-ribosyl)-ATP + H2O = 1-(5-phospho-beta-D-ribosyl)-5'-AMP + diphosphate + H(+). The protein operates within amino-acid biosynthesis; L-histidine biosynthesis; L-histidine from 5-phospho-alpha-D-ribose 1-diphosphate: step 2/9. This Pseudomonas putida (strain ATCC 700007 / DSM 6899 / JCM 31910 / BCRC 17059 / LMG 24140 / F1) protein is Phosphoribosyl-ATP pyrophosphatase.